Here is a 1076-residue protein sequence, read N- to C-terminus: DNA-directed RNA polymerase subunit beta (1076 aa).

This sequence belongs to the RNA polymerase beta chain family. As to quaternary structure, in plastids the minimal PEP RNA polymerase catalytic core is composed of four subunits: alpha, beta, beta', and beta''. When a (nuclear-encoded) sigma factor is associated with the core the holoenzyme is formed, which can initiate transcription.

The protein localises to the plastid. Its subcellular location is the chloroplast. The catalysed reaction is RNA(n) + a ribonucleoside 5'-triphosphate = RNA(n+1) + diphosphate. Functionally, DNA-dependent RNA polymerase catalyzes the transcription of DNA into RNA using the four ribonucleoside triphosphates as substrates. The protein is DNA-directed RNA polymerase subunit beta of Hordeum vulgare (Barley).